The primary structure comprises 206 residues: U-scoloptoxin(08)-Cw1a (206 aa).

A signal peptide spans 1 to 24 (MIFRVNLLFSCFCFVLFVFDFSNA). The propeptide occupies 25–164 (SKYDQGSLNI…DLPELKRRKR (140 aa)). Residues 37-43 (RLWRDWE) form an RLWRNWE 1; approximate repeat. Residues 71 to 77 (RLWRDWE) form an RLWRNWE 2; approximate repeat. The RLWRNWE 3; approximate repeat unit spans residues 104–110 (RLWRDWE). The RLWRNWE 4 repeat unit spans residues 137–143 (RLWRNWE). One copy of the RLWRNWE 5; approximate repeat lies at 164-170 (RLWRNED).

The protein belongs to the scoloptoxin-08 family. Contains 3 disulfide bonds. As to expression, expressed by the venom gland.

It localises to the secreted. The polypeptide is U-scoloptoxin(08)-Cw1a (Cormocephalus westwoodi (Westwood's green centipede)).